Consider the following 311-residue polypeptide: Retinol dehydrogenase 8 (311 aa).

Residue 9-18 (LISGCSSGIG) coordinates NADP(+). 3 consecutive transmembrane segments (helical) span residues 86–106 (VLVN…SLAA), 137–157 (IVVI…VYAA), and 169–189 (LAIQ…GPVV). Ser142 is a binding site for substrate. The active-site Proton acceptor is the Tyr155.

This sequence belongs to the short-chain dehydrogenases/reductases (SDR) family. Detected in photoreceptor outer segments in the retina (at protein level).

It localises to the membrane. It carries out the reaction all-trans-retinol + NADP(+) = all-trans-retinal + NADPH + H(+). Retinol dehydrogenase with a clear preference for NADP. Converts all-trans-retinal to all-trans-retinol. May play a role in the regeneration of visual pigment at high light intensity. The polypeptide is Retinol dehydrogenase 8 (RDH8) (Homo sapiens (Human)).